The chain runs to 360 residues: Biotin synthase (360 aa).

The interval Met1–Ala21 is disordered. Residues Asn62–Arg289 enclose the Radical SAM core domain. Positions 77, 81, and 84 each coordinate [4Fe-4S] cluster. The [2Fe-2S] cluster site is built by Cys121, Cys152, Cys212, and Arg284.

The protein belongs to the radical SAM superfamily. Biotin synthase family. In terms of assembly, homodimer. Requires [4Fe-4S] cluster as cofactor. [2Fe-2S] cluster is required as a cofactor.

The enzyme catalyses (4R,5S)-dethiobiotin + (sulfur carrier)-SH + 2 reduced [2Fe-2S]-[ferredoxin] + 2 S-adenosyl-L-methionine = (sulfur carrier)-H + biotin + 2 5'-deoxyadenosine + 2 L-methionine + 2 oxidized [2Fe-2S]-[ferredoxin]. It participates in cofactor biosynthesis; biotin biosynthesis; biotin from 7,8-diaminononanoate: step 2/2. Functionally, catalyzes the conversion of dethiobiotin (DTB) to biotin by the insertion of a sulfur atom into dethiobiotin via a radical-based mechanism. This is Biotin synthase from Paraburkholderia xenovorans (strain LB400).